Here is a 173-residue protein sequence, read N- to C-terminus: NADH-ubiquinone oxidoreductase chain 6 (173 aa).

Helical transmembrane passes span 1-21, 27-47, 48-68, 87-107, and 139-159; these read MTYF…AVAS, YGVV…LSLG, VSFV…VVFV, VVGY…VGGL, and CGVG…FVVL.

It belongs to the complex I subunit 6 family.

It localises to the mitochondrion membrane. It catalyses the reaction a ubiquinone + NADH + 5 H(+)(in) = a ubiquinol + NAD(+) + 4 H(+)(out). Core subunit of the mitochondrial membrane respiratory chain NADH dehydrogenase (Complex I) that is believed to belong to the minimal assembly required for catalysis. Complex I functions in the transfer of electrons from NADH to the respiratory chain. The immediate electron acceptor for the enzyme is believed to be ubiquinone. The polypeptide is NADH-ubiquinone oxidoreductase chain 6 (MT-ND6) (Synthliboramphus wumizusume (Japanese murrelet)).